The sequence spans 80 residues: Progonadoliberin-1 (80 aa).

Residues 1–21 (MGIKRALWWMVVCVVVLQVSA) form the signal peptide. At Gln-22 the chain carries Pyrrolidone carboxylic acid. At Gly-31 the chain carries Glycine amide.

Belongs to the GnRH family.

The protein resides in the secreted. Stimulates the secretion of gonadotropins. This is Progonadoliberin-1 (gnrh1) from Clarias gariepinus (North African catfish).